A 412-amino-acid chain; its full sequence is DnaJ homolog subfamily A member 2 (412 aa).

Positions 8–70 (KLYDILGVPP…EKRELYDRYG (63 aa)) constitute a J domain. Lys-39 carries the post-translational modification N6-acetyllysine. Ser-78 and Ser-123 each carry phosphoserine. The CR-type zinc finger occupies 130-214 (GKTTKLQLSK…CEGKKVIKEV (85 aa)). Residue Lys-134 forms a Glycyl lysine isopeptide (Lys-Gly) (interchain with G-Cter in SUMO2) linkage. Cys-143 and Cys-146 together coordinate Zn(2+). A CXXCXGXG motif repeat occupies 143 to 150 (CSACSGQG). Lys-152 bears the N6-acetyllysine mark. 6 residues coordinate Zn(2+): Cys-159, Cys-162, Cys-186, Cys-189, Cys-202, and Cys-205. CXXCXGXG motif repeat units follow at residues 159–166 (CSACRGRG), 186–193 (CSDCNGEG), and 202–209 (CKKCEGKK). Positions 365–412 (IGETEEVELQEFDSTRGSGGGQRREAYNDSSDEESSSHHGPGVQCAHQ) are disordered. Phosphotyrosine is present on Tyr-391. Residues Ser-394 and Ser-395 each carry the phosphoserine modification. Cysteine methyl ester is present on Cys-409. Cys-409 carries the S-farnesyl cysteine lipid modification. Positions 410 to 412 (AHQ) are cleaved as a propeptide — removed in mature form.

It is found in the membrane. Co-chaperone of Hsc70. Stimulates ATP hydrolysis and the folding of unfolded proteins mediated by HSPA1A/B (in vitro). This chain is DnaJ homolog subfamily A member 2 (Dnaja2), found in Mus musculus (Mouse).